A 239-amino-acid chain; its full sequence is Ribosomal RNA small subunit methyltransferase G (239 aa).

S-adenosyl-L-methionine is bound by residues G78, F83, 129–130 (AE), and R148.

The protein belongs to the methyltransferase superfamily. RNA methyltransferase RsmG family.

The protein localises to the cytoplasm. In terms of biological role, specifically methylates the N7 position of a guanine in 16S rRNA. The sequence is that of Ribosomal RNA small subunit methyltransferase G from Clostridium botulinum (strain ATCC 19397 / Type A).